Reading from the N-terminus, the 680-residue chain is E3 ubiquitin-protein ligase Midline-1 (680 aa).

The RING-type zinc finger occupies 10 to 60 (CPICLELFEDPLLLPCAHSLCFNCAHRILVSHCATNEPVESINAFQCPTCR). Residues Ser-92 and Ser-96 each carry the phosphoserine modification. 2 consecutive B box-type zinc fingers follow at residues 116 to 165 (KVLC…IEPI) and 172 to 212 (GLMC…VAAL). Cys-119, Cys-122, Cys-134, Cys-137, Cys-142, Cys-145, His-150, His-159, Cys-175, His-178, Cys-198, and His-204 together coordinate Zn(2+). Residues 205–264 (RDHQVAALSERYDKLKQNLESNLTNLIKRNTELETLLAKLIQTCQHVEVNASRQEAKLTE) are a coiled coil. One can recognise a COS domain in the interval 320–379 (LKENDHARFLQTAKNITERVSMATASSQVLIPEINLNDTFDTFALDFSREKKLLECLDYL). Positions 384–494 (PPAIREELCT…RSSEPGKLKT (111 aa)) constitute a Fibronectin type-III domain. Positions 484–498 (SRSSEPGKLKTNSQP) are enriched in polar residues. Disordered stretches follow at residues 484-503 (SRSS…RLDP) and 516-535 (NLTV…PERF). Residues 495–672 (NSQPFRLDPK…IVTGLPIPDH (178 aa)) enclose the B30.2/SPRY domain. Over residues 516–533 (NLTVERDESSSKKSHAPE) the composition is skewed to basic and acidic residues. Residue Ser-524 is modified to Phosphoserine.

The protein belongs to the TRIM/RBCC family. In terms of assembly, homodimer or heterodimer with MID2. Interacts with IGBP1. Phosphorylated. Ubiquitously expressed in fetus and adult. At 9 dpc-10.5 dpc, highest expression found in frontonasal processes, branchial arches and CNS. From 12.5 dpc to 16.5 dpc, high levels found in rostral part of CNS. At 14.5 dpc, begins to be highly expressed in kidney and lung. At 16.5 dpc, highly expressed in the mucosa of the hindgut and cutaneous region of the stomach.

The protein resides in the cytoplasm. Its subcellular location is the cytoskeleton. It catalyses the reaction S-ubiquitinyl-[E2 ubiquitin-conjugating enzyme]-L-cysteine + [acceptor protein]-L-lysine = [E2 ubiquitin-conjugating enzyme]-L-cysteine + N(6)-ubiquitinyl-[acceptor protein]-L-lysine.. Has E3 ubiquitin ligase activity towards IGBP1, promoting its monoubiquitination, which results in deprotection of the catalytic subunit of protein phosphatase PP2A, and its subsequent degradation by polyubiquitination. The polypeptide is E3 ubiquitin-protein ligase Midline-1 (Mid1) (Mus musculus (Mouse)).